A 588-amino-acid polypeptide reads, in one-letter code: Vesicular glutamate transporter 3 (588 aa).

The Cytoplasmic portion of the chain corresponds to 1–76 (MPFNAFDTFK…CSCCGIPKRY (76 aa)). A helical membrane pass occupies residues 77-97 (IIAVMSGLGFCISFGIRCNLG). Over 98 to 130 (VAIVEMVNNSTVYVDGKPEIQTAQFNWDPETVG) the chain is Vesicular. A glycan (N-linked (GlcNAc...) asparagine) is linked at asparagine 106. The helical transmembrane segment at 131–151 (LIHGSFFWGYIVTQIPGGFIS) threads the bilayer. Topologically, residues 152-153 (NK) are cytoplasmic. Residues 154–174 (FAANRVFGAAIFLTSTLNMFI) form a helical membrane-spanning segment. The Vesicular portion of the chain corresponds to 175–182 (PSAARVHY). The helical transmembrane segment at 183–203 (GCVMCVRILQGLVEGVTYPAC) threads the bilayer. The Cytoplasmic portion of the chain corresponds to 204–221 (HGMWSKWAPPLERSRLAT). The chain crosses the membrane as a helical span at residues 222–242 (TSFCGSYAGAVVAMPLAGVLV). At 243–249 (QYIGWAS) the chain is on the vesicular side. Residues 250 to 270 (VFYIYGMFGIIWYMFWLLQAY) form a helical membrane-spanning segment. At 271–314 (ECPAVHPTISNEERTYIETSIGEGANLASLSKFNTPWRRFFTSL) the chain is on the cytoplasmic side. The helical transmembrane segment at 315–335 (PVYAIIVANFCRSWTFYLLLI) threads the bilayer. The Vesicular portion of the chain corresponds to 336-353 (SQPAYFEEVFGFAISKVG). The chain crosses the membrane as a helical span at residues 354-374 (LLSAVPHMVMTIVVPIGGQLA). Over 375-390 (DYLRSRKILTTTAVRK) the chain is Cytoplasmic. Residues 391–411 (IMNCGGFGMEATLLLVVGFSH) form a helical membrane-spanning segment. Topologically, residues 412–413 (TK) are vesicular. Residues 414-434 (GVAISFLVLAVGFSGFAISGF) form a helical membrane-spanning segment. The Cytoplasmic portion of the chain corresponds to 435–447 (NVNHLDIAPRYAS). A helical membrane pass occupies residues 448–468 (ILMGISNGVGTLSGMVCPLIV). The Vesicular portion of the chain corresponds to 469-481 (GAMTKHKTREEWQ). Residues 482–502 (NVFLIAALVHYSGVIFYGVFA) traverse the membrane as a helical segment. The Cytoplasmic segment spans residues 503-585 (SGEKQDWADP…LSYQNEEDFS (83 aa)). The interval 539–588 (FVSPRKKMSYGATTQNCEVQKTDRRQQRESAFEGEEPLSYQNEEDFSETS) is disordered. Residues 558-569 (QKTDRRQQRESA) show a composition bias toward basic and acidic residues. Over residues 570–588 (FEGEEPLSYQNEEDFSETS) the composition is skewed to acidic residues.

This sequence belongs to the major facilitator superfamily. Sodium/anion cotransporter family. VGLUT subfamily. As to expression, expressed in brain, kidney and liver. Expressed within the amygdala, brainstem, cerberal cortex, dorsal root ganglia, dorsal spinal cord, hippocampus, hypothalamus, retina, striatum and ventral spinal cord. Expressed within neurons of the caudate-putamen, olfactory tubercle, nucleus accumbens, hippocampus, interpeduncular nucleus and dorsal and medial raphe nuclei. Expressed in inner hair cells of the ear. Expressed at synaptic terminals within the lateral superior olive (LSO), a nucleus of the mammalian sound localization system, and in the medial nucleus of the trapezoid body (MNTB), which provides inhibitory input to the LSO.

Its subcellular location is the cytoplasmic vesicle. It localises to the secretory vesicle. The protein resides in the synaptic vesicle membrane. The protein localises to the cell membrane. It is found in the synapse. Its subcellular location is the synaptosome. The catalysed reaction is L-glutamate(out) = L-glutamate(in). The enzyme catalyses chloride(in) = chloride(out). It carries out the reaction 3 Na(+)(out) + phosphate(out) = 3 Na(+)(in) + phosphate(in). With respect to regulation, the L-glutamate uniporter activity exhibits a biphasic dependence on chloride concentration. Chloride channel activity is allosterically activated by lumenal H(+) and Cl(-) leading to synaptic vesicles acidification. The glutamate transport activity is allosterically activated by lumenal H(+) and Cl(-), preventing non-vesicular L-glutamate release. Multifunctional transporter that transports L-glutamate as well as multiple ions such as chloride, sodium and phosphate. At the synaptic vesicle membrane, mainly functions as an uniporter that mediates the uptake of L-glutamate into synaptic vesicles at presynaptic nerve terminals of excitatory neural cells. The L-glutamate uniporter activity is electrogenic and is driven by the proton electrochemical gradient, mainly by the electrical gradient established by the vacuolar H(+)-ATPase across the synaptic vesicle membrane. In addition, functions as a chloride channel that allows a chloride permeation through the synaptic vesicle membrane that affects the proton electrochemical gradient and promotes synaptic vesicles acidification. At the plasma membrane, following exocytosis, functions as a symporter of Na(+) and phosphate from the extracellular space to the cytoplasm allowing synaptic phosphate homeostasis regulation. The symporter activity is electrogenic. Moreover, operates synergistically with SLC18A3/VACHT under a constant H(+) gradient, thereby allowing striatal vesicular acetylcholine uptake. The protein is Vesicular glutamate transporter 3 of Rattus norvegicus (Rat).